Here is a 43-residue protein sequence, read N- to C-terminus: Protein PsbN 1 (43 aa).

A helical transmembrane segment spans residues 3–23 (TATILGILIAAAVVGITVLAL).

Belongs to the PsbN family.

It is found in the cellular thylakoid membrane. Functionally, may play a role in photosystem I and II biogenesis. This chain is Protein PsbN 1, found in Microcystis aeruginosa (strain NIES-843 / IAM M-2473).